The following is a 210-amino-acid chain: MTLSRVHQQVIAFPAVNTAPVGYLPDPASINKLQIPTSSKVSMLQKKKTDSFTNGARDQDKLGPKLTETVKRKLSLGAKILQMGGLEKIYKRLFKVCDKEKLFKAYQCYLSTTEGSIAGLLFISSKKIAFCSERSIKVTSPQGDLTRVHYKVSIPLCKINGVNQSQNTKKPSQRYLEVVTVDNYDFWFMGFVSYQKAFNCLEKALNEDEQ.

Residues lysine 88–glutamine 166 enclose the GRAM domain.

It belongs to the GEM family.

The protein is GEM-like protein 7 of Arabidopsis thaliana (Mouse-ear cress).